A 381-amino-acid chain; its full sequence is GDP-mannose transporter (381 aa).

Positions Met1 to Val12 are enriched in basic and acidic residues. The segment at Met1 to Arg28 is disordered. The Cytoplasmic portion of the chain corresponds to Met1–Ser36. The chain crosses the membrane as a helical span at residues Leu37–Val57. The Lumenal portion of the chain corresponds to Thr58–Asp67. Residues Phe68–Ile88 form a helical membrane-spanning segment. Residues Cys89 to Lys107 are Cytoplasmic-facing. A helical transmembrane segment spans residues Trp108–Leu126. The Lumenal portion of the chain corresponds to Lys127 to Ser130. The chain crosses the membrane as a helical span at residues Ile131–Phe153. Over Gly154–Thr161 the chain is Cytoplasmic. Residues Leu162–Leu184 form a helical membrane-spanning segment. Topologically, residues Asn185–Ser199 are lumenal. The chain crosses the membrane as a helical span at residues Thr200–Leu220. Over Ser221 to Leu242 the chain is Cytoplasmic. Residues Leu243–Ile263 traverse the membrane as a helical segment. The Lumenal portion of the chain corresponds to Gln264 to Thr274. A helical transmembrane segment spans residues Val275–Trp295. Topologically, residues Ala296–Thr303 are cytoplasmic. The chain crosses the membrane as a helical span at residues Thr304–Phe324. At Asp325 to Pro327 the chain is on the lumenal side. A helical membrane pass occupies residues Val328–Val348. Residues Ala349–Ala381 lie on the Cytoplasmic side of the membrane.

Belongs to the TPT transporter family. SLC35D subfamily. Homooligomer.

The protein resides in the golgi apparatus membrane. It localises to the cytoplasmic vesicle membrane. The protein localises to the endoplasmic reticulum membrane. In terms of biological role, involved in the import of GDP-mannose from the cytoplasm into the Golgi lumen. The chain is GDP-mannose transporter (VRG4) from Phaeosphaeria nodorum (strain SN15 / ATCC MYA-4574 / FGSC 10173) (Glume blotch fungus).